The sequence spans 228 residues: MLLPIPDVLSPAQLSQLRAQLDVADWADGRITAGHQSAQAKDNAQLPEDSAVAREAGALVLEALARSSTFFSAVLPRRIYPPLFNRYSGGQSFGYHVDNAIRYDRSRGGADPVRTDVSATLFLSDPDSYDGGELVIEDTYGTQSVKLPAGHLVIYPGTSLHRVMPVTRGARVACFFWTQSMLRDAAQRRLLFELDVSIRRLTQDTPGHPSLIQLTGVYHNLLRQWADV.

One can recognise a Fe2OG dioxygenase domain in the interval 78–180; the sequence is RIYPPLFNRY…RVACFFWTQS (103 aa). Residues His-96, Asp-98, and His-161 each contribute to the Fe cation site. Arg-171 provides a ligand contact to 2-oxoglutarate.

It depends on Fe(2+) as a cofactor. The cofactor is L-ascorbate.

In Xanthomonas euvesicatoria pv. vesicatoria (strain 85-10) (Xanthomonas campestris pv. vesicatoria), this protein is PKHD-type hydroxylase XCV3086.